The chain runs to 156 residues: Small ribosomal subunit protein uS7c (156 aa).

The protein belongs to the universal ribosomal protein uS7 family. As to quaternary structure, part of the 30S ribosomal subunit.

The protein localises to the plastid. Its subcellular location is the chloroplast. Its function is as follows. One of the primary rRNA binding proteins, it binds directly to 16S rRNA where it nucleates assembly of the head domain of the 30S subunit. The protein is Small ribosomal subunit protein uS7c (rps7) of Euglena gracilis.